The sequence spans 155 residues: MPKGEGKVIAQNKKARHDYFIEETYEAGLVLQGTEIKSIRNGRVNLKDSFAKVEKGEVFLHNMHISPYEQGNRYNHDPLRTRKLLLHRREINKLIGYTKEQGYTLVPLKLYIKNGFAKVELGVAKGKKKYDKREDMKRKEAQREIERAFRERQKI.

Belongs to the SmpB family.

The protein resides in the cytoplasm. In terms of biological role, required for rescue of stalled ribosomes mediated by trans-translation. Binds to transfer-messenger RNA (tmRNA), required for stable association of tmRNA with ribosomes. tmRNA and SmpB together mimic tRNA shape, replacing the anticodon stem-loop with SmpB. tmRNA is encoded by the ssrA gene; the 2 termini fold to resemble tRNA(Ala) and it encodes a 'tag peptide', a short internal open reading frame. During trans-translation Ala-aminoacylated tmRNA acts like a tRNA, entering the A-site of stalled ribosomes, displacing the stalled mRNA. The ribosome then switches to translate the ORF on the tmRNA; the nascent peptide is terminated with the 'tag peptide' encoded by the tmRNA and targeted for degradation. The ribosome is freed to recommence translation, which seems to be the essential function of trans-translation. In Geobacillus thermodenitrificans (strain NG80-2), this protein is SsrA-binding protein.